We begin with the raw amino-acid sequence, 292 residues long: MVEVKKTTKTKSTEEKAPKITKATKEKTSDKTALKAKTPKTKVSDKAESTPKKASVKTSAKAEKINVEKTEKVEKVNVEKVSIKRESSSKDVQKADFSNIKELNSKIFEFEKNYDQAIFDCILSERASRRQGTHKVKNRAEVSGTGKKPWKQKGTGKARAGSLRNPIFVGGGRAFGPSVNRNYKISINKKVRLNALMASLFALAKSNSVLLKTFSLEKPSTKDLVEELRKINASNLKRILLVSDDKNIFLSARNLKNVKVTKVTSLMIEDLVAADLLILSNENIKYLEGLIK.

Composition is skewed to basic and acidic residues over residues 1–33 and 42–51; these read MVEV…DKTA and KVSDKAESTP. Disordered stretches follow at residues 1–59 and 132–158; these read MVEV…VKTS and GTHK…TGKA.

This sequence belongs to the universal ribosomal protein uL4 family. In terms of assembly, part of the 50S ribosomal subunit.

In terms of biological role, one of the primary rRNA binding proteins, this protein initially binds near the 5'-end of the 23S rRNA. It is important during the early stages of 50S assembly. It makes multiple contacts with different domains of the 23S rRNA in the assembled 50S subunit and ribosome. Its function is as follows. Forms part of the polypeptide exit tunnel. In Mycoplasmopsis pulmonis (strain UAB CTIP) (Mycoplasma pulmonis), this protein is Large ribosomal subunit protein uL4.